A 101-amino-acid polypeptide reads, in one-letter code: Ribonuclease kappa-B (101 aa).

2 consecutive transmembrane segments (helical) span residues 13-33 and 68-88; these read ACGI…GIFF and VGIN…VSLC.

This sequence belongs to the RNase K family.

It is found in the membrane. Functionally, endoribonuclease which preferentially cleaves ApU and ApG phosphodiester bonds. This chain is Ribonuclease kappa-B (rnasekb), found in Danio rerio (Zebrafish).